We begin with the raw amino-acid sequence, 633 residues long: DEAD-box ATP-dependent RNA helicase 37 (633 aa).

Positions 1 to 110 (MSASWADVAD…WNNRSGGWDR (110 aa)) are disordered. Serine 2 carries the post-translational modification N-acetylserine. Positions 11–25 (SENTGSGSSNQNSHP) are enriched in polar residues. Composition is skewed to gly residues over residues 68 to 80 (GGSG…GGGY) and 87 to 101 (PGSG…GGGW). The Q motif motif lies at 159-187 (NTFAEIDLGEALNLNIRRCKYVKPTPVQR). Residues 190–374 (IPILLEGRDL…ADFLANYIFL (185 aa)) form the Helicase ATP-binding domain. 203–210 (AQTGSGKT) lines the ATP pocket. The DEAD box signature appears at 318-321 (DEAD). One can recognise a Helicase C-terminal domain in the interval 401-552 (HLMDLLHAQR…EVPEWLTRYA (152 aa)). Residues 555–600 (SSFGGGKNRRSGGRFGGRDFRREGSFGSGRGGYGGGGGGYGGGGGY) are disordered. Residues 580-600 (FGSGRGGYGGGGGGYGGGGGY) are compositionally biased toward gly residues.

It belongs to the DEAD box helicase family. DDX3/DED1 subfamily.

It carries out the reaction ATP + H2O = ADP + phosphate + H(+). This is DEAD-box ATP-dependent RNA helicase 37 (RH37) from Arabidopsis thaliana (Mouse-ear cress).